A 568-amino-acid polypeptide reads, in one-letter code: Proton-coupled zinc antiporter SLC30A9, mitochondrial (568 aa).

The N-terminal 67 residues, 1–67 (MLPGLAAAAA…IGTLSQVKLY (67 aa)), are a transit peptide targeting the mitochondrion. The next 5 membrane-spanning stretches (helical) occupy residues 239-259 (VVMV…LAWI), 314-334 (GVGI…MGLL), 342-362 (LLWA…TLLV), 392-412 (VILL…TCMG), and 424-444 (SLGS…LIYT). The LXXLL motif signature appears at 462-466 (LTELL).

It belongs to the cation diffusion facilitator (CDF) transporter (TC 2.A.4) family. SLC30A subfamily. In terms of assembly, interacts with GRIP1, ESR1 and AR. In terms of tissue distribution, ubiquitously expressed in fetal and adult tissues and cancer cell lines.

The protein resides in the mitochondrion membrane. Its subcellular location is the nucleus. The protein localises to the endoplasmic reticulum. It carries out the reaction Zn(2+)(in) + 2 H(+)(out) = Zn(2+)(out) + 2 H(+)(in). In terms of biological role, mitochondrial proton-coupled zinc ion antiporter mediating the export of zinc from the mitochondria and involved in zinc homeostasis, zinc mobilization as well as mitochondrial morphology and health. In nucleus, functions as a secondary coactivator for nuclear receptors by cooperating with p160 coactivators subtypes. Plays a role in transcriptional activation of Wnt-responsive genes. This chain is Proton-coupled zinc antiporter SLC30A9, mitochondrial, found in Homo sapiens (Human).